We begin with the raw amino-acid sequence, 340 residues long: Ferrochelatase (340 aa).

Fe cation is bound by residues His189 and Glu292.

The protein belongs to the ferrochelatase family.

Its subcellular location is the cytoplasm. The catalysed reaction is heme b + 2 H(+) = protoporphyrin IX + Fe(2+). It functions in the pathway porphyrin-containing compound metabolism; protoheme biosynthesis; protoheme from protoporphyrin-IX: step 1/1. Functionally, catalyzes the ferrous insertion into protoporphyrin IX. The chain is Ferrochelatase from Pseudomonas savastanoi pv. phaseolicola (strain 1448A / Race 6) (Pseudomonas syringae pv. phaseolicola (strain 1448A / Race 6)).